A 439-amino-acid polypeptide reads, in one-letter code: Protein ABHD8 (439 aa).

Disordered regions lie at residues 49-70 (AGPA…AAQG) and 124-156 (PAGS…RPKR). The span at 136–145 (AGSGSGSGSG) shows a compositional bias: gly residues. Basic residues predominate over residues 146–156 (GRRRRARRPKR). Residues 177 to 279 (VLFFIHGVGG…HKVIMINGGG (103 aa)) form the AB hydrolase-1 domain. Catalysis depends on charge relay system residues Ser-252, Asp-370, and His-398.

Belongs to the AB hydrolase superfamily. As to quaternary structure, interacts with NLRP3 (via NACHT and LLR domains); this interaction is enhanced in the presence of NLRP3 inflammasome inducers, such as ATP, nigericin, silica, or alum. Interacts with ZDHHC12. (Microbial infection) Interacts with SARS-CoV-2 nucleoprotein N; this interaction disrupts the NLRP3-ABHD8 association, enhancing NLRP3 stability, ultimately leading to increased inflammasome activation.

The protein resides in the cytoplasm. Functionally, negatively regulates NLRP3-driven inflammation. Promotes NLRP3 degradation through the chaperone-mediated autophagy (CMA) pathway, hence attenuating inflammasome activation and IL1B secretion. Acts by recruiting palmitoyltransferase ZDHHC12 to NLRP3, facilitating NLRP3 palmitoylation and subsequent degradation. This is Protein ABHD8 from Homo sapiens (Human).